Here is a 210-residue protein sequence, read N- to C-terminus: Large ribosomal subunit protein uL4 (210 aa).

A disordered region spans residues 46–77; the sequence is QGTHKSKERGEIAGSTKKIKKQKGTGTARAGS.

The protein belongs to the universal ribosomal protein uL4 family. As to quaternary structure, part of the 50S ribosomal subunit.

Functionally, one of the primary rRNA binding proteins, this protein initially binds near the 5'-end of the 23S rRNA. It is important during the early stages of 50S assembly. It makes multiple contacts with different domains of the 23S rRNA in the assembled 50S subunit and ribosome. In terms of biological role, forms part of the polypeptide exit tunnel. The chain is Large ribosomal subunit protein uL4 from Amoebophilus asiaticus (strain 5a2).